Here is a 355-residue protein sequence, read N- to C-terminus: MTELKNDRYLRALLKEPVDYTPVWMMRQAGRYLPEYKATRAQAGDFMSLCKNAELASEVTLQPLRRFPLDAAILFSDILTIPDAMGLELRFAAGEGPVFDKPITCKADVEKIGLPDPEGELQYVMNAVRQIRKDLNGDVPLIGFSGSPWTLATYMVEGGSSKAFTKIKKMMYAEPQTLHLLLDKLADSVIEYLNAQIKAGAQSVMVFDTWGGVLTPRDYNLFSLQYMHKIVDGLIRENDGRRVPVTLFTKNGGMWLEQIAATGCDAVGLDWTINIADAKARIGDKVALQGNMDPSMLYASPERIREEVAGILEGFGDAGTGHVFNLGHGIHLDVPPENAGVFVEAVHELSKPYHK.

Substrate contacts are provided by residues 27–31, Asp77, Tyr154, Thr209, and His328; that span reads RQAGR.

Belongs to the uroporphyrinogen decarboxylase family. In terms of assembly, homodimer.

Its subcellular location is the cytoplasm. The enzyme catalyses uroporphyrinogen III + 4 H(+) = coproporphyrinogen III + 4 CO2. It participates in porphyrin-containing compound metabolism; protoporphyrin-IX biosynthesis; coproporphyrinogen-III from 5-aminolevulinate: step 4/4. In terms of biological role, catalyzes the decarboxylation of four acetate groups of uroporphyrinogen-III to yield coproporphyrinogen-III. The protein is Uroporphyrinogen decarboxylase of Vibrio campbellii (strain ATCC BAA-1116).